Here is a 208-residue protein sequence, read N- to C-terminus: 3-demethoxyubiquinol 3-hydroxylase (208 aa).

Residues glutamate 57, glutamate 87, histidine 90, glutamate 139, glutamate 171, and histidine 174 each coordinate Fe cation.

It belongs to the COQ7 family. Fe cation is required as a cofactor.

It is found in the cell membrane. The enzyme catalyses a 5-methoxy-2-methyl-3-(all-trans-polyprenyl)benzene-1,4-diol + AH2 + O2 = a 3-demethylubiquinol + A + H2O. It participates in cofactor biosynthesis; ubiquinone biosynthesis. In terms of biological role, catalyzes the hydroxylation of 2-nonaprenyl-3-methyl-6-methoxy-1,4-benzoquinol during ubiquinone biosynthesis. This Nitrosomonas europaea (strain ATCC 19718 / CIP 103999 / KCTC 2705 / NBRC 14298) protein is 3-demethoxyubiquinol 3-hydroxylase.